The primary structure comprises 204 residues: Cytochrome c biogenesis ATP-binding export protein CcmA (204 aa).

The ABC transporter domain occupies 2 to 204 (IEVRDLGVSR…LDAEDLGGFL (203 aa)). 34–41 (GPNGIGKT) provides a ligand contact to ATP.

The protein belongs to the ABC transporter superfamily. CcmA exporter (TC 3.A.1.107) family. The complex is composed of two ATP-binding proteins (CcmA) and two transmembrane proteins (CcmB).

It localises to the cell inner membrane. It catalyses the reaction heme b(in) + ATP + H2O = heme b(out) + ADP + phosphate + H(+). Functionally, part of the ABC transporter complex CcmAB involved in the biogenesis of c-type cytochromes; once thought to export heme, this seems not to be the case, but its exact role is uncertain. Responsible for energy coupling to the transport system. In Ruegeria sp. (strain TM1040) (Silicibacter sp.), this protein is Cytochrome c biogenesis ATP-binding export protein CcmA.